Consider the following 332-residue polypeptide: Adenosine receptor A2b (332 aa).

Over 1 to 8 the chain is Extracellular; sequence MQLETQDA. The chain crosses the membrane as a helical span at residues 9–33; that stretch reads LYVALELVIAALAVAGNVLVCAAVG. At 34–43 the chain is on the cytoplasmic side; that stretch reads ASSALQTPTN. The helical transmembrane segment at 44–67 threads the bilayer; the sequence is YFLVSLATADVAVGLFAIPFAITI. At 68 to 78 the chain is on the extracellular side; that stretch reads SLGFCTDFHGC. The cysteines at positions 78 and 171 are disulfide-linked. Residues 79-101 traverse the membrane as a helical segment; that stretch reads LFLACFVLVLTQSSIFSLLAVAV. The Cytoplasmic segment spans residues 102–121; that stretch reads DRYLAIRVPLRYKGLVTGTR. The chain crosses the membrane as a helical span at residues 122–144; that stretch reads ARGIIAVLWVLAFGIGLTPFLGW. Topologically, residues 145 to 178 are extracellular; the sequence is NSKDSATSNCTELGDGIANKSCCPVTCLFENVVP. 2 N-linked (GlcNAc...) asparagine glycosylation sites follow: Asn153 and Asn163. Glu174 lines the adenosine pocket. The helical transmembrane segment at 179–203 threads the bilayer; it reads MSYMVYFNFFGCVLPPLLIMLVIYI. The Cytoplasmic segment spans residues 204-235; the sequence is KIFMVACKQLQRMELMDHSRTTLQREIHAAKS. The helical transmembrane segment at 236 to 259 threads the bilayer; the sequence is LAMIVGIFALCWLPVHAINCITLF. Asn254 lines the adenosine pocket. The Extracellular portion of the chain corresponds to 260–267; it reads HPALAKDK. A helical transmembrane segment spans residues 268-291; it reads PKWVMNVAILLSHANSVVNPIVYA. Residues Ser279 and His280 each coordinate adenosine. The Cytoplasmic portion of the chain corresponds to 292-332; that stretch reads YRNRDFRYSFHKIISRYVLCQAETKGGSGQAGAQSTLSLGL. The S-palmitoyl cysteine moiety is linked to residue Cys311.

The protein belongs to the G-protein coupled receptor 1 family.

The protein resides in the cell membrane. In terms of biological role, receptor for adenosine. The activity of this receptor is mediated by G proteins which activate adenylyl cyclase. The sequence is that of Adenosine receptor A2b (Adora2b) from Mus musculus (Mouse).